We begin with the raw amino-acid sequence, 1086 residues long: Lon protease homolog, mitochondrial (1086 aa).

The N-terminal 55 residues, 1–55 (MLRTSCTSSLRRVVGKYVVSPLVASQIRFATSSVRSQPYLLNSELTELPAQFKRY), are a transit peptide targeting the mitochondrion. The interval 61–176 (TEKPEGDVPE…EPNEIVTNAG (116 aa)) is disordered. Residues 69 to 83 (PESGPEPSGESGISE) show a composition bias toward low complexity. A compositionally biased stretch (basic and acidic residues) spans 85-120 (SNVENDKHDGNDEIKPEAEKNEKDEIEKPEIDKDAI). Positions 124–163 (DGVSESSVENVSGSSSAAGGASAPPSGNSNNNNNNNNNNN) are enriched in low complexity. The Lon N-terminal domain maps to 183-406 (LLAIPMKDRP…KALELLKVEL (224 aa)). 558 to 565 (GPPGTGKT) contributes to the ATP binding site. 2 stretches are compositionally biased toward basic and acidic residues: residues 767 to 782 (EARE…EAKS) and 815 to 827 (KVDE…SEEL). Disordered regions lie at residues 767-788 (EARE…ITGS) and 800-835 (KAQS…EEEE). Residues 871–1059 (IPPPGVATGL…QDVFDEIFPN (189 aa)) form the Lon proteolytic domain. Active-site residues include S965 and K1008.

It belongs to the peptidase S16 family. As to quaternary structure, homohexamer or homoheptamer. Organized in a ring with a central cavity.

The protein localises to the mitochondrion matrix. It carries out the reaction Hydrolysis of proteins in presence of ATP.. ATP-dependent serine protease that mediates the selective degradation of misfolded, unassembled or oxidatively damaged polypeptides as well as certain short-lived regulatory proteins in the mitochondrial matrix. May also have a chaperone function in the assembly of inner membrane protein complexes. Participates in the regulation of mitochondrial gene expression and in the maintenance of the integrity of the mitochondrial genome. Binds to mitochondrial DNA in a site-specific manner. The sequence is that of Lon protease homolog, mitochondrial from Scheffersomyces stipitis (strain ATCC 58785 / CBS 6054 / NBRC 10063 / NRRL Y-11545) (Yeast).